Consider the following 685-residue polypeptide: Small ribosomal subunit protein mS39 (685 aa).

Residues 1-10 constitute a mitochondrion transit peptide; the sequence is MAAAAVAARR. Lys127 is modified (N6-acetyllysine). 10 PPR repeats span residues 150–184, 185–220, 254–288, 289–329, 330–366, 367–407, 412–446, 454–488, 489–523, and 572–606; these read IEDV…GTTV, SLET…ENLE, NARS…RLSA, DVYT…KVKP, NLQT…GIEP, SLAT…TFSP, DGRF…DNRK, RKVY…VFLP, HYQI…SHTF, and PANP…KKIP. Residues 663-685 are disordered; sequence LGNLTELNSSDGESSSDSDSDDK. The segment covering 676 to 685 has biased composition (acidic residues); sequence SSSDSDSDDK.

It belongs to the mitochondrion-specific ribosomal protein mS39 family. As to quaternary structure, component of the mitochondrial ribosome small subunit (28S) which comprises a 12S rRNA and about 30 distinct proteins. Associated with the 12S mitochondrial rRNA (12S mt-rRNA).

It is found in the mitochondrion. In terms of biological role, mitochondrial RNA-binding protein that has a role in mitochondrial translation. In Mus musculus (Mouse), this protein is Small ribosomal subunit protein mS39 (Ptcd3).